The chain runs to 386 residues: MVEATAQETDRPRFSFSIAAREGKARTGTIEMKRGVIRTPAFMPVGTAATVKALKPETVRATGADIILGNTYHLMLRPGAERIAKLGGLHSFMGWDRPILTDSGGYQVMSLSSLTKQSEEGVTFKSHLDGSRHMLSPERSIEIQHLLGSDIVMAFDECTPYPATPSRAASSMERSMRWAKRSRDAFDSRKEQAENAALFGIQQGSVFENLRQQSADALAEIGFDGYAVGGLAVGEGQDEMFRVLDFSVPMLPDDKPHYLMGVGKPDDIVGAVERGIDMFDCVLPTRSGRNGQAFTWDGPINIRNARFSEDLTPLDSECHCAVCQKWSRAYIHHLIRAGEILGAMLMTEHNIAFYQQLMQKIRDSISEGRFSQFAQDFRARYFARNS.

The active-site Proton acceptor is D102. Residues 102–106, D156, Q203, and G230 contribute to the substrate site; that span reads DSGGY. The segment at 261 to 267 is RNA binding; that stretch reads GVGKPDD. D280 serves as the catalytic Nucleophile. The RNA binding; important for wobble base 34 recognition stretch occupies residues 285–289; sequence TRSGR. Residues C318, C320, C323, and H349 each coordinate Zn(2+).

Belongs to the queuine tRNA-ribosyltransferase family. As to quaternary structure, homodimer. Within each dimer, one monomer is responsible for RNA recognition and catalysis, while the other monomer binds to the replacement base PreQ1. It depends on Zn(2+) as a cofactor.

It carries out the reaction 7-aminomethyl-7-carbaguanine + guanosine(34) in tRNA = 7-aminomethyl-7-carbaguanosine(34) in tRNA + guanine. The protein operates within tRNA modification; tRNA-queuosine biosynthesis. Catalyzes the base-exchange of a guanine (G) residue with the queuine precursor 7-aminomethyl-7-deazaguanine (PreQ1) at position 34 (anticodon wobble position) in tRNAs with GU(N) anticodons (tRNA-Asp, -Asn, -His and -Tyr). Catalysis occurs through a double-displacement mechanism. The nucleophile active site attacks the C1' of nucleotide 34 to detach the guanine base from the RNA, forming a covalent enzyme-RNA intermediate. The proton acceptor active site deprotonates the incoming PreQ1, allowing a nucleophilic attack on the C1' of the ribose to form the product. After dissociation, two additional enzymatic reactions on the tRNA convert PreQ1 to queuine (Q), resulting in the hypermodified nucleoside queuosine (7-(((4,5-cis-dihydroxy-2-cyclopenten-1-yl)amino)methyl)-7-deazaguanosine). The protein is Queuine tRNA-ribosyltransferase of Zymomonas mobilis subsp. mobilis (strain ATCC 31821 / ZM4 / CP4).